Reading from the N-terminus, the 122-residue chain is UPF0231 protein VF_2154 (122 aa).

This sequence belongs to the UPF0231 family.

The protein is UPF0231 protein VF_2154 of Aliivibrio fischeri (strain ATCC 700601 / ES114) (Vibrio fischeri).